Here is a 205-residue protein sequence, read N- to C-terminus: Keratin-associated protein 4-6 (205 aa).

Repeat copies occupy residues 20 to 24 (CCRPS), 25 to 29 (CCQTT), 30 to 34 (CCRTT), 35 to 39 (CCRPS), 40 to 44 (CCVSS), 45 to 49 (CCRPQ), 50 to 54 (CCQSV), 55 to 59 (CCQPT), 60 to 64 (CCRPS), 65 to 68 (CCPS), 69 to 73 (CCQTT), 74 to 78 (CCRTT), 79 to 83 (CCRPS), 84 to 88 (CCVSS), 89 to 93 (CCRPQ), 94 to 98 (CCQSV), 99 to 103 (CCQPT), 104 to 108 (CCRPS), 114 to 118 (CCRPS), 119 to 123 (CCVSR), 124 to 128 (CCRSQ), 129 to 133 (CCQSV), 134 to 138 (CCQPT), 139 to 143 (CCRPS), 144 to 148 (CCISS), 149 to 153 (CCRPS), 154 to 158 (CCESS), 159 to 163 (CCRPC), 164 to 168 (CCRPC), and 169 to 173 (CCLRP). The tract at residues 20–173 (CCRPSCCQTT…CCRPCCCLRP (154 aa)) is 30 X 5 AA repeats of C-C-[IRQVEL]-[SPTR]-[STVQRCP].

This sequence belongs to the KRTAP type 4 family. As to quaternary structure, interacts with hair keratins. As to expression, expressed in the hair follicles.

In terms of biological role, in the hair cortex, hair keratin intermediate filaments are embedded in an interfilamentous matrix, consisting of hair keratin-associated proteins (KRTAP), which are essential for the formation of a rigid and resistant hair shaft through their extensive disulfide bond cross-linking with abundant cysteine residues of hair keratins. The matrix proteins include the high-sulfur and high-glycine-tyrosine keratins. The chain is Keratin-associated protein 4-6 (KRTAP4-6) from Homo sapiens (Human).